The sequence spans 572 residues: Probable D-xylulose kinase A (572 aa).

Residues histidine 95, arginine 166, aspartate 282, and asparagine 283 each contribute to the substrate site. ATP-binding positions include tryptophan 365, glycine 470–glycine 471, and asparagine 474.

This sequence belongs to the FGGY kinase family.

The protein localises to the cytoplasm. It carries out the reaction D-xylulose + ATP = D-xylulose 5-phosphate + ADP + H(+). Highly specific D-xylulose kinase which participates in the catabolism of xylose. Xylose is a major component of hemicelluloses such as xylan. Most fungi utilize D-xylose via three enzymatic reactions, xylose reductase (XR), xylitol dehydrogenase (XDH), and xylulokinase, to form xylulose 5-phosphate, which enters pentose phosphate pathway. The polypeptide is Probable D-xylulose kinase A (xkiA) (Aspergillus flavus (strain ATCC 200026 / FGSC A1120 / IAM 13836 / NRRL 3357 / JCM 12722 / SRRC 167)).